A 96-amino-acid chain; its full sequence is Co-chaperonin GroES (96 aa).

The protein belongs to the GroES chaperonin family. In terms of assembly, heptamer of 7 subunits arranged in a ring. Interacts with the chaperonin GroEL.

Its subcellular location is the cytoplasm. Together with the chaperonin GroEL, plays an essential role in assisting protein folding. The GroEL-GroES system forms a nano-cage that allows encapsulation of the non-native substrate proteins and provides a physical environment optimized to promote and accelerate protein folding. GroES binds to the apical surface of the GroEL ring, thereby capping the opening of the GroEL channel. This is Co-chaperonin GroES from Paraburkholderia phymatum (strain DSM 17167 / CIP 108236 / LMG 21445 / STM815) (Burkholderia phymatum).